The following is a 239-amino-acid chain: 2,3,4,5-tetrahydropyridine-2,6-dicarboxylate N-acetyltransferase (239 aa).

This sequence belongs to the transferase hexapeptide repeat family. DapH subfamily.

The enzyme catalyses (S)-2,3,4,5-tetrahydrodipicolinate + acetyl-CoA + H2O = L-2-acetamido-6-oxoheptanedioate + CoA. It participates in amino-acid biosynthesis; L-lysine biosynthesis via DAP pathway; LL-2,6-diaminopimelate from (S)-tetrahydrodipicolinate (acetylase route): step 1/3. Its function is as follows. Catalyzes the transfer of an acetyl group from acetyl-CoA to tetrahydrodipicolinate. This Staphylococcus aureus (strain Newman) protein is 2,3,4,5-tetrahydropyridine-2,6-dicarboxylate N-acetyltransferase.